Here is a 189-residue protein sequence, read N- to C-terminus: Molybdopterin synthase catalytic subunit (189 aa).

Position 20 is a phosphoserine (Ser20). Substrate contacts are provided by residues 143 to 144 (HR), Lys159, and 166 to 168 (KKE).

Belongs to the MoaE family. MOCS2B subfamily. As to quaternary structure, heterotetramer; composed of 2 small (MOCS2A) and 2 large (MOCS2B) subunits.

Its subcellular location is the cytoplasm. It localises to the cytosol. It carries out the reaction 2 [molybdopterin-synthase sulfur-carrier protein]-C-terminal-Gly-aminoethanethioate + cyclic pyranopterin phosphate + H2O = molybdopterin + 2 [molybdopterin-synthase sulfur-carrier protein]-C-terminal Gly-Gly + 2 H(+). The protein operates within cofactor biosynthesis; molybdopterin biosynthesis. Its function is as follows. Catalytic subunit of the molybdopterin synthase complex, a complex that catalyzes the conversion of precursor Z into molybdopterin. Acts by mediating the incorporation of 2 sulfur atoms from thiocarboxylated MOCS2A into precursor Z to generate a dithiolene group. This chain is Molybdopterin synthase catalytic subunit, found in Bos taurus (Bovine).